Consider the following 400-residue polypeptide: Acetate kinase (400 aa).

Asn-7 lines the Mg(2+) pocket. Residue Lys-14 coordinates ATP. A substrate-binding site is contributed by Arg-92. Asp-149 serves as the catalytic Proton donor/acceptor. ATP-binding positions include 209-213 (HLGNG), 283-285 (DAR), and 331-335 (GMGEN). Glu-385 contributes to the Mg(2+) binding site.

This sequence belongs to the acetokinase family. As to quaternary structure, homodimer. The cofactor is Mg(2+). Requires Mn(2+) as cofactor.

The protein localises to the cytoplasm. The enzyme catalyses acetate + ATP = acetyl phosphate + ADP. Its pathway is metabolic intermediate biosynthesis; acetyl-CoA biosynthesis; acetyl-CoA from acetate: step 1/2. Functionally, catalyzes the formation of acetyl phosphate from acetate and ATP. Can also catalyze the reverse reaction. In Helicobacter acinonychis (strain Sheeba), this protein is Acetate kinase.